The following is a 151-amino-acid chain: Protein SprT-like (151 aa).

Positions 6–148 (LQALVERISL…FCRGKLKKIK (143 aa)) constitute a SprT-like domain. His-67 contributes to the Zn(2+) binding site. Residue Glu-68 is part of the active site. His-71 contributes to the Zn(2+) binding site.

Belongs to the SprT family. Requires Zn(2+) as cofactor.

It localises to the cytoplasm. The protein is Protein SprT-like of Anoxybacillus flavithermus (strain DSM 21510 / WK1).